We begin with the raw amino-acid sequence, 173 residues long: Avenin-like a5 (173 aa).

The signal sequence occupies residues 1-19; the sequence is MKTMLILALIALAATSVVA.

This sequence belongs to the prolamin family. In terms of processing, contains 7 disulfide bonds.

In terms of biological role, seed storage protein. Not integrated in the gluten polymer through disulfide bonds, unless incorporated by reduction and reoxidation during dough making. Increases dough strength and bread volume, but decreases dough stability when added into a base wheat flour. This is Avenin-like a5 from Triticum aestivum (Wheat).